Consider the following 901-residue polypeptide: HTH-type transcriptional regulator MalT (901 aa).

39–46 (SPAGYGKT) contacts ATP. The 66-residue stretch at 829 to 894 (ELIRTSPLTQ…DAVQHAQQLL (66 aa)) folds into the HTH luxR-type domain. A DNA-binding region (H-T-H motif) is located at residues 853–872 (NEQIAGELAVAATTIKTHIR).

Belongs to the MalT family. As to quaternary structure, monomer in solution. Oligomerizes to an active state in the presence of the positive effectors ATP and maltotriose.

Activated by ATP and maltotriose, which are both required for DNA binding. Functionally, positively regulates the transcription of the maltose regulon whose gene products are responsible for uptake and catabolism of malto-oligosaccharides. Specifically binds to the promoter region of its target genes, recognizing a short DNA motif called the MalT box. This chain is HTH-type transcriptional regulator MalT, found in Salmonella agona (strain SL483).